Consider the following 136-residue polypeptide: Class I hydrophobin A (136 aa).

An N-terminal signal peptide occupies residues 1–16; sequence MRFALAITTLIAAVTA. 4 cysteine pairs are disulfide-bonded: cysteine 39–cysteine 109, cysteine 47–cysteine 103, cysteine 48–cysteine 85, and cysteine 110–cysteine 128.

It belongs to the fungal hydrophobin family. As to expression, expressed in aerial conidia, in vitro blastospores, submerged conidia, and cells sporulating on chitin and insect cuticle, with hyd1 expression peaking in growing mycelia.

The protein resides in the secreted. The protein localises to the cell wall. Its subcellular location is the spore coat. It localises to the vacuole. It is found in the cytoplasmic vesicle. Aerial growth, conidiation, and dispersal of filamentous fungi in the environment rely upon a capability of their secreting small amphipathic proteins called hydrophobins (HPBs) with low sequence identity. Class I can self-assemble into an outermost layer of rodlet bundles on aerial cell surfaces, conferring cellular hydrophobicity that supports fungal growth, development and dispersal; whereas Class II form highly ordered films at water-air interfaces through intermolecular interactions but contribute nothing to the rodlet structure. Hyd1A contributes to certain cell wall-related features, such as hydrophobicity but is not involved in cell wall-related events during fungal proliferation in host hemocoel. Hyd1A and hyd1B coregulate the formation, morphology and orderly assembly of rodlet bundles required for conidial hydrophobicity and infectivity. Contributes to the spore coat rodlet layer. The polypeptide is Class I hydrophobin A (Beauveria bassiana (strain ARSEF 2860) (White muscardine disease fungus)).